Consider the following 543-residue polypeptide: Phosphoenolpyruvate carboxykinase (ATP) (543 aa).

244 to 251 serves as a coordination point for ATP; that stretch reads GLSGTGKT.

It belongs to the phosphoenolpyruvate carboxykinase (ATP) family.

The enzyme catalyses oxaloacetate + ATP = phosphoenolpyruvate + ADP + CO2. The protein operates within carbohydrate biosynthesis; gluconeogenesis. The protein is Phosphoenolpyruvate carboxykinase (ATP) (PCK1) of Kluyveromyces lactis (strain ATCC 8585 / CBS 2359 / DSM 70799 / NBRC 1267 / NRRL Y-1140 / WM37) (Yeast).